The chain runs to 115 residues: NADH-ubiquinone oxidoreductase chain 3 (115 aa).

The next 3 helical transmembrane spans lie at Leu4 to Leu24, Phe55 to Leu75, and Ile84 to Tyr104.

Belongs to the complex I subunit 3 family. As to quaternary structure, core subunit of respiratory chain NADH dehydrogenase (Complex I) which is composed of 45 different subunits. Interacts with TMEM186. Interacts with TMEM242.

The protein localises to the mitochondrion inner membrane. It carries out the reaction a ubiquinone + NADH + 5 H(+)(in) = a ubiquinol + NAD(+) + 4 H(+)(out). Its function is as follows. Core subunit of the mitochondrial membrane respiratory chain NADH dehydrogenase (Complex I) which catalyzes electron transfer from NADH through the respiratory chain, using ubiquinone as an electron acceptor. Essential for the catalytic activity of complex I. This is NADH-ubiquinone oxidoreductase chain 3 from Peromyscus melanotis (Black-eared mouse).